The following is a 420-amino-acid chain: Protein disulfide isomerase CRELD1 (420 aa).

The N-terminal stretch at 1-29 (MAPRSSRGIAPAMLCGLSLFLGFPGLVWV) is a signal peptide. Residues 30-362 (QISVPPQSSP…GFFSEMTEDE (333 aa)) are Extracellular-facing. The CXXC motif lies at 46 to 49 (CHTC). 4 disulfides stabilise this stretch: cysteine 46/cysteine 49, cysteine 155/cysteine 169, cysteine 163/cysteine 181, and cysteine 183/cysteine 192. Residues 153–193 (LPCPGGAERPCGGYGHCEGEGTRGGSGHCDCQAGYGGEACG) enclose the EGF-like 1 domain. Asparagine 205 carries an N-linked (GlcNAc...) asparagine glycan. FU repeat units lie at residues 208–255 (HLVC…ERAS) and 268–315 (SYEC…AVCP). Residues 278-281 (CLGC) carry the CXXC motif. Intrachain disulfides connect cysteine 278–cysteine 281, cysteine 309–cysteine 321, cysteine 314–cysteine 330, and cysteine 332–cysteine 343. One can recognise an EGF-like 2; calcium-binding domain in the interval 305–344 (DVDECETAVCPGENQQCENTEGSYRCICADGYKQMEGICV). Residues 363–383 (LVVLQQMFFGVIICALATLAA) form a helical membrane-spanning segment. Residue lysine 384 is a topological domain, cytoplasmic. Residues 385-405 (GDLVFTAIFIGAVAAMTGYWL) form a helical membrane-spanning segment. Residues 406–420 (SERSDRVLEGFIKGR) are Extracellular-facing.

Belongs to the CRELD family.

It is found in the membrane. It carries out the reaction Catalyzes the rearrangement of -S-S- bonds in proteins.. Protein disulfide isomerase. Promotes the localization of acetylcholine receptors (AChRs) to the plasma membrane. In Bos taurus (Bovine), this protein is Protein disulfide isomerase CRELD1 (CRELD1).